We begin with the raw amino-acid sequence, 353 residues long: Photosystem II protein D1 (353 aa).

At Thr-2 the chain carries N-acetylthreonine. Thr-2 carries the phosphothreonine modification. 3 helical membrane-spanning segments follow: residues 29 to 46, 118 to 133, and 142 to 156; these read YIGWFGVLMIPTLLTATS, HFLLGVACYMGREWEL, and WIAVAYSAPVAAATA. His-118 is a chlorophyll a binding site. Tyr-126 contacts pheophytin a. Asp-170 and Glu-189 together coordinate [CaMn4O5] cluster. A helical transmembrane segment spans residues 197–218; sequence FHMLGVAGVFGGSLFSAMHGSL. His-198 is a binding site for chlorophyll a. A quinone-binding positions include His-215 and 264–265; that span reads SF. His-215 contributes to the Fe cation binding site. His-272 contributes to the Fe cation binding site. A helical transmembrane segment spans residues 274 to 288; that stretch reads FLAAWPVVGIWFTAL. Positions 332, 333, 342, and 344 each coordinate [CaMn4O5] cluster. Positions 345 to 353 are excised as a propeptide; it reads SVEAPSINA.

Belongs to the reaction center PufL/M/PsbA/D family. In terms of assembly, PSII is composed of 1 copy each of membrane proteins PsbA, PsbB, PsbC, PsbD, PsbE, PsbF, PsbH, PsbI, PsbJ, PsbK, PsbL, PsbM, PsbT, PsbX, PsbY, PsbZ, Psb30/Ycf12, at least 3 peripheral proteins of the oxygen-evolving complex and a large number of cofactors. It forms dimeric complexes. The D1/D2 heterodimer binds P680, chlorophylls that are the primary electron donor of PSII, and subsequent electron acceptors. It shares a non-heme iron and each subunit binds pheophytin, quinone, additional chlorophylls, carotenoids and lipids. D1 provides most of the ligands for the Mn4-Ca-O5 cluster of the oxygen-evolving complex (OEC). There is also a Cl(-1) ion associated with D1 and D2, which is required for oxygen evolution. The PSII complex binds additional chlorophylls, carotenoids and specific lipids. serves as cofactor. In terms of processing, tyr-161 forms a radical intermediate that is referred to as redox-active TyrZ, YZ or Y-Z. C-terminally processed by CTPA; processing is essential to allow assembly of the oxygen-evolving complex and thus photosynthetic growth.

Its subcellular location is the plastid. The protein resides in the chloroplast thylakoid membrane. It carries out the reaction 2 a plastoquinone + 4 hnu + 2 H2O = 2 a plastoquinol + O2. Functionally, photosystem II (PSII) is a light-driven water:plastoquinone oxidoreductase that uses light energy to abstract electrons from H(2)O, generating O(2) and a proton gradient subsequently used for ATP formation. It consists of a core antenna complex that captures photons, and an electron transfer chain that converts photonic excitation into a charge separation. The D1/D2 (PsbA/PsbD) reaction center heterodimer binds P680, the primary electron donor of PSII as well as several subsequent electron acceptors. The protein is Photosystem II protein D1 of Chara vulgaris (Common stonewort).